The sequence spans 1099 residues: Inverted formin-2 (1099 aa).

One can recognise a GBD/FH3 domain in the interval M1–Q330. Basic and acidic residues-rich tracts occupy residues S348 to T359 and Q367 to P385. Disordered stretches follow at residues S348–P391, P432–P509, and A1000–N1019. One can recognise an FH1 domain in the interval T426 to P569. Residues P452 to P499 are compositionally biased toward pro residues. Residues F621–D1009 enclose the FH2 domain. Positions L907–N1019 form a coiled coil. One can recognise a WH2 domain in the interval D1037–T1052. Positions K1064–P1085 are disordered. The segment covering N1071 to E1083 has biased composition (basic and acidic residues).

Belongs to the formin homology family.

This Xenopus laevis (African clawed frog) protein is Inverted formin-2 (inf2).